We begin with the raw amino-acid sequence, 332 residues long: Ketol-acid reductoisomerase (NADP(+)) (332 aa).

The 182-residue stretch at 1–182 folds into the KARI N-terminal Rossmann domain; sequence MATIYYEKDA…GCTRAGVLAT (182 aa). NADP(+)-binding positions include 25-28, R48, S53, and 83-86; these read YGSQ and DELQ. H108 is a catalytic residue. G134 is an NADP(+) binding site. The region spanning 183–328 is the KARI C-terminal knotted domain; sequence TFKEETETDL…KELRSMMPWL (146 aa). 4 residues coordinate Mg(2+): D191, E195, E227, and E231. S252 lines the substrate pocket.

This sequence belongs to the ketol-acid reductoisomerase family. Mg(2+) serves as cofactor.

The catalysed reaction is (2R)-2,3-dihydroxy-3-methylbutanoate + NADP(+) = (2S)-2-acetolactate + NADPH + H(+). The enzyme catalyses (2R,3R)-2,3-dihydroxy-3-methylpentanoate + NADP(+) = (S)-2-ethyl-2-hydroxy-3-oxobutanoate + NADPH + H(+). Its pathway is amino-acid biosynthesis; L-isoleucine biosynthesis; L-isoleucine from 2-oxobutanoate: step 2/4. It participates in amino-acid biosynthesis; L-valine biosynthesis; L-valine from pyruvate: step 2/4. Involved in the biosynthesis of branched-chain amino acids (BCAA). Catalyzes an alkyl-migration followed by a ketol-acid reduction of (S)-2-acetolactate (S2AL) to yield (R)-2,3-dihydroxy-isovalerate. In the isomerase reaction, S2AL is rearranged via a Mg-dependent methyl migration to produce 3-hydroxy-3-methyl-2-ketobutyrate (HMKB). In the reductase reaction, this 2-ketoacid undergoes a metal-dependent reduction by NADPH to yield (R)-2,3-dihydroxy-isovalerate. The polypeptide is Ketol-acid reductoisomerase (NADP(+)) (Methanocella arvoryzae (strain DSM 22066 / NBRC 105507 / MRE50)).